The sequence spans 242 residues: Segregation and condensation protein A (242 aa).

The protein belongs to the ScpA family. As to quaternary structure, component of a cohesin-like complex composed of ScpA, ScpB and the Smc homodimer, in which ScpA and ScpB bind to the head domain of Smc. The presence of the three proteins is required for the association of the complex with DNA.

Its subcellular location is the cytoplasm. Participates in chromosomal partition during cell division. May act via the formation of a condensin-like complex containing Smc and ScpB that pull DNA away from mid-cell into both cell halves. This chain is Segregation and condensation protein A, found in Lactococcus lactis subsp. lactis (strain IL1403) (Streptococcus lactis).